We begin with the raw amino-acid sequence, 444 residues long: Enolase (444 aa).

His-163 and Glu-172 together coordinate substrate. Residue Glu-215 is the Proton donor of the active site. Mg(2+)-binding residues include Asp-250, Glu-300, and Asp-327. 2 residues coordinate substrate: Glu-300 and Asp-327. The active-site Proton acceptor is the Lys-352. Substrate contacts are provided by residues 379–382 and Lys-403; that span reads SHRS.

It belongs to the enolase family. In terms of assembly, homodimer. The cofactor is Mg(2+).

It localises to the cytoplasm. It carries out the reaction (2R)-2-phosphoglycerate = phosphoenolpyruvate + H2O. Its pathway is carbohydrate degradation; glycolysis; pyruvate from D-glyceraldehyde 3-phosphate: step 4/5. The sequence is that of Enolase (PGH1) from Solanum lycopersicum (Tomato).